We begin with the raw amino-acid sequence, 622 residues long: Putative E3 ubiquitin-protein ligase ORTHRUS 4 (622 aa).

A PHD-type zinc finger spans residues 12–62 (DGVCMRCQVTPPSEETLTCGTCVTPWHVSCLLPESLASSTGDWECPDCSGV). Residues 129–169 (CSICIQLPERPVTTPCGHNFCLKCFEKWAVGQGKLTCMICR) form an RING-type 1 zinc finger. Residues 258-407 (TRNQGVLVGE…HKMCRYLFVR (150 aa)) form the YDG domain. The segment at 498 to 555 (CQICRKVLSLPVTTPCAHNFCKACLEAKFAGITQLRDRSNGVRKLRAKKNIMTCPCCT) adopts an RING-type 2 zinc-finger fold. The stretch at 566-602 (QVNREMMEIIENFKKSEEEAEVAESSNISEEEEEESE) forms a coiled coil. A disordered region spans residues 579 to 622 (KKSEEEAEVAESSNISEEEEEESEPPTKKIKMDNNSVGDTSLSA). Positions 611 to 622 (DNNSVGDTSLSA) are enriched in polar residues.

The protein localises to the nucleus. The catalysed reaction is S-ubiquitinyl-[E2 ubiquitin-conjugating enzyme]-L-cysteine + [acceptor protein]-L-lysine = [E2 ubiquitin-conjugating enzyme]-L-cysteine + N(6)-ubiquitinyl-[acceptor protein]-L-lysine.. It participates in protein modification; protein ubiquitination. In terms of biological role, E3 ubiquitin-protein ligase. May participate in CpG methylation-dependent transcriptional regulation. This Arabidopsis thaliana (Mouse-ear cress) protein is Putative E3 ubiquitin-protein ligase ORTHRUS 4 (ORTH4).